The following is a 233-amino-acid chain: Glyceraldehyde 3-phosphate phosphatase (233 aa).

Belongs to the HAD-like hydrolase superfamily. The cofactor is Mg(2+).

In terms of biological role, catalyzes the dephosphorylation of D,L-glyceraldehyde 3-phosphate in vitro. The protein is Glyceraldehyde 3-phosphate phosphatase of Methanopyrus kandleri (strain AV19 / DSM 6324 / JCM 9639 / NBRC 100938).